Reading from the N-terminus, the 194-residue chain is Ribosome maturation factor RimM (194 aa).

A PRC barrel domain is found at 113 to 194; the sequence is DGEYYWIDLI…RIVADWGLDY (82 aa).

This sequence belongs to the RimM family. Binds ribosomal protein uS19.

The protein resides in the cytoplasm. Its function is as follows. An accessory protein needed during the final step in the assembly of 30S ribosomal subunit, possibly for assembly of the head region. Essential for efficient processing of 16S rRNA. May be needed both before and after RbfA during the maturation of 16S rRNA. It has affinity for free ribosomal 30S subunits but not for 70S ribosomes. The polypeptide is Ribosome maturation factor RimM (Leptothrix cholodnii (strain ATCC 51168 / LMG 8142 / SP-6) (Leptothrix discophora (strain SP-6))).